Here is a 2529-residue protein sequence, read N- to C-terminus: Zinc finger FYVE domain-containing protein 26 (2529 aa).

Disordered stretches follow at residues 584–650, 689–709, and 733–810; these read HLPE…PGPH, SSHRTPEETKLPEDQSCSAAR, and VTSN…RFQT. A phosphoserine mark is found at S605 and S609. Over residues 689–701 the composition is skewed to basic and acidic residues; sequence SSHRTPEETKLPE. Residues 755–765 are compositionally biased toward basic residues; that stretch reads SSLRRGRRTRR. Over residues 778-796 the composition is skewed to low complexity; the sequence is SLEGTSSELSTSTSEGSLS. S791 carries the phosphoserine modification. The segment covering 797 to 810 has biased composition (polar residues); it reads AVSGQVESDSRFQT. Positions 859 to 884 form a coiled coil; that stretch reads MFVERYQEVIQELARVEHKIENQNSD. The interval 1258-1286 is disordered; it reads GLPLSTLGSPRPSENPSAERKSHSSPKDS. Over residues 1263-1273 the composition is skewed to polar residues; sequence TLGSPRPSENP. The span at 1274–1283 shows a compositional bias: basic and acidic residues; the sequence is SAERKSHSSP. The stretch at 1488–1515 forms a coiled coil; it reads VSDMAVQEELKSELQRKLMELRVYQKIL. S1732, S1754, S1770, and S1772 each carry phosphoserine. The interval 1762–1799 is disordered; it reads APGSALVRSPSPKERAFPQTQPPVEFVPPETPPARDQW. Residues 1802 to 1862 form an FYVE-type zinc finger; sequence DETESVCMVC…VCDQCYSYYN (61 aa). Zn(2+)-binding residues include C1808, C1811, C1825, C1828, C1833, C1836, C1854, and C1857. Positions 1865–1884 are disordered; the sequence is TPEESPCQSEVPDSAKNESP.

This sequence belongs to the ZFYVE26 family. As to quaternary structure, interacts with AP5Z1, AP5B1, AP5S1 and SPG11. Interacts with TTC19 and KIF13A.

It localises to the cytoplasm. Its subcellular location is the cytoskeleton. The protein localises to the microtubule organizing center. The protein resides in the centrosome. It is found in the midbody. In terms of biological role, phosphatidylinositol 3-phosphate-binding protein required for the abscission step in cytokinesis: recruited to the midbody during cytokinesis and acts as a regulator of abscission. May also be required for efficient homologous recombination DNA double-strand break repair. This chain is Zinc finger FYVE domain-containing protein 26 (Zfyve26), found in Mus musculus (Mouse).